The sequence spans 338 residues: UPF0284 protein TV0153 (338 aa).

Belongs to the UPF0284 family.

The sequence is that of UPF0284 protein TV0153 from Thermoplasma volcanium (strain ATCC 51530 / DSM 4299 / JCM 9571 / NBRC 15438 / GSS1).